Here is a 147-residue protein sequence, read N- to C-terminus: UPF0735 ACT domain-containing protein ABC1543 (147 aa).

One can recognise an ACT domain in the interval 70 to 145 (TFSINLADRS…SVERVELVGS (76 aa)).

This sequence belongs to the UPF0735 family.

The polypeptide is UPF0735 ACT domain-containing protein ABC1543 (Shouchella clausii (strain KSM-K16) (Alkalihalobacillus clausii)).